A 323-amino-acid chain; its full sequence is Lipoyl synthase (323 aa).

Cysteine 65, cysteine 70, cysteine 76, cysteine 91, cysteine 95, cysteine 98, and serine 304 together coordinate [4Fe-4S] cluster. A Radical SAM core domain is found at 77 to 293 (FNNGTATFMI…KKEALSIGFT (217 aa)).

It belongs to the radical SAM superfamily. Lipoyl synthase family. Requires [4Fe-4S] cluster as cofactor.

The protein localises to the cytoplasm. It carries out the reaction [[Fe-S] cluster scaffold protein carrying a second [4Fe-4S](2+) cluster] + N(6)-octanoyl-L-lysyl-[protein] + 2 oxidized [2Fe-2S]-[ferredoxin] + 2 S-adenosyl-L-methionine + 4 H(+) = [[Fe-S] cluster scaffold protein] + N(6)-[(R)-dihydrolipoyl]-L-lysyl-[protein] + 4 Fe(3+) + 2 hydrogen sulfide + 2 5'-deoxyadenosine + 2 L-methionine + 2 reduced [2Fe-2S]-[ferredoxin]. It functions in the pathway protein modification; protein lipoylation via endogenous pathway; protein N(6)-(lipoyl)lysine from octanoyl-[acyl-carrier-protein]: step 2/2. Functionally, catalyzes the radical-mediated insertion of two sulfur atoms into the C-6 and C-8 positions of the octanoyl moiety bound to the lipoyl domains of lipoate-dependent enzymes, thereby converting the octanoylated domains into lipoylated derivatives. The sequence is that of Lipoyl synthase from Buchnera aphidicola subsp. Acyrthosiphon pisum (strain APS) (Acyrthosiphon pisum symbiotic bacterium).